A 156-amino-acid polypeptide reads, in one-letter code: uncharacterized protein (156 aa).

His-55 is an active-site residue.

This sequence belongs to the thioester dehydratase family. FabZ subfamily.

This is an uncharacterized protein from Halalkalibacterium halodurans (strain ATCC BAA-125 / DSM 18197 / FERM 7344 / JCM 9153 / C-125) (Bacillus halodurans).